The primary structure comprises 270 residues: MWNSGFESFSSSTYGGAGGYTQSPGGFGSPTPSQAEKKSRVRAQHIVPCTISQLLSATLTDEVFRIGDVEISQVTIVGIIRHAEKAPTNIVYKIDDMTAPPMDVRQWVDTDDASGENAVVPPETYVKVAGHLRSFQNKKSLVAFKIIPLEDMNEFTAHILEVVNSHMMLSKPNSQASAGRPSMSNPGMSEPGNFSGNNFMPANGLTVVQNQVLNLIKACPRPEGLNFQDLRSQLQHMPVPSIKQAVDFLCNEGHIYSTVDDDHFKSTDAE.

The residue at position 1 (methionine 1) is an N-acetylmethionine. A phosphoserine; by PRKDC mark is found at serine 4 and serine 8. The tract at residues 20–41 (YTQSPGGFGSPTPSQAEKKSRV) is disordered. Threonine 21 carries the phosphothreonine; by PRKDC modification. Serine 23 carries the post-translational modification Phosphoserine; by CDK2. Serine 29 bears the Phosphoserine; by CDK1 mark. A Phosphoserine; by PRKDC modification is found at serine 33. Residues lysine 37 and lysine 38 each participate in a glycyl lysine isopeptide (Lys-Gly) (interchain with G-Cter in ubiquitin) cross-link. Residues 74-148 (VTIVGIIRHA…KSLVAFKIIP (75 aa)) constitute a DNA-binding region (OB). Residues 171–192 (KPNSQASAGRPSMSNPGMSEPG) form a disordered region. The segment at 187 to 270 (GMSEPGNFSG…DDHFKSTDAE (84 aa)) is interaction with RAD52, TIPIN, UNG and XPA.

Belongs to the replication factor A protein 2 family. In terms of assembly, component of the replication protein A complex (RPA/RP-A), a heterotrimeric complex composed of RPA1, RPA2 and RPA3. Interacts with PRPF19; the PRP19-CDC5L complex is recruited to the sites of DNA repair where it ubiquitinates the replication protein A complex (RPA). Interacts with SERTAD3. Interacts with TIPIN. Interacts with TIMELESS. Interacts with PPP4R2; the interaction is direct, DNA damage-dependent and mediates the recruitment of the PP4 catalytic subunit PPP4C. Interacts (hyperphosphorylated) with RAD51. Interacts with SMARCAL1; the interaction is direct and mediates the recruitment to the RPA complex of SMARCAL1. Interacts with RAD52 and XPA; those interactions are direct and associate RAD52 and XPA to the RPA complex. Interacts with FBH1. Interacts with ETAA1; the interaction is direct and promotes ETAA1 recruitment at stalled replication forks. Interacts with DDI2. Interacts (in unphosphorylated form via N-terminus) with EIF4EBP3; the interaction enhances EIF4EBP3-mediated inhibition of EIF4E-mediated mRNA nuclear export. Interacts with nuclear UNG (isoform 2); this interaction mediates UNG recruitment to RPA-coated single-stranded DNA at stalled replication forks. Post-translationally, differentially phosphorylated throughout the cell cycle, becoming phosphorylated at the G1-S transition and dephosphorylated in late mitosis. Mainly phosphorylated at Ser-23 and Ser-29, by cyclin A-CDK2 and cyclin B-CDK1, respectively during DNA replication and mitosis. Dephosphorylation may require the serine/threonine-protein phosphatase 4. Phosphorylation at Ser-23 and Ser-29 is a prerequisite for further phosphorylation. Becomes hyperphosphorylated on additional residues including Ser-4, Ser-8, Thr-21 and Ser-33 in response to DNA damage. Hyperphosphorylation is mediated by ATM, ATR and PRKDC. Primarily recruited to DNA repair nuclear foci as a hypophosphorylated form it undergoes subsequent hyperphosphorylation, catalyzed by ATR. Hyperphosphorylation is required for RAD51 recruitment to chromatin and efficient DNA repair. Phosphorylation at Thr-21 depends upon RFWD3 presence. In terms of processing, DNA damage-induced 'Lys-63'-linked polyubiquitination by PRPF19 mediates ATRIP recruitment to the RPA complex at sites of DNA damage and activation of ATR. Ubiquitinated by RFWD3 at stalled replication forks in response to DNA damage: ubiquitination by RFWD3 does not lead to degradation by the proteasome and promotes removal of the RPA complex from stalled replication forks, promoting homologous recombination.

It localises to the nucleus. It is found in the PML body. Functionally, as part of the heterotrimeric replication protein A complex (RPA/RP-A), binds and stabilizes single-stranded DNA intermediates, that form during DNA replication or upon DNA stress. It prevents their reannealing and in parallel, recruits and activates different proteins and complexes involved in DNA metabolism. Thereby, it plays an essential role both in DNA replication and the cellular response to DNA damage. In the cellular response to DNA damage, the RPA complex controls DNA repair and DNA damage checkpoint activation. Through recruitment of ATRIP activates the ATR kinase a master regulator of the DNA damage response. It is required for the recruitment of the DNA double-strand break repair factors RAD51 and RAD52 to chromatin in response to DNA damage. Also recruits to sites of DNA damage proteins like XPA and XPG that are involved in nucleotide excision repair and is required for this mechanism of DNA repair. Also plays a role in base excision repair (BER) probably through interaction with UNG. Also recruits SMARCAL1/HARP, which is involved in replication fork restart, to sites of DNA damage. May also play a role in telomere maintenance. The protein is Replication protein A 32 kDa subunit of Mus musculus (Mouse).